The primary structure comprises 230 residues: MTCCEGWTSCNGFSLLVLLLLGVTLNAIPLILNFVDEDQFFENPISCFEWWFPGIIGAGVMAIPATTMSLAARKRACCNNKTGMFLSSLLNAITVIGAAYCLLVSIQALAEGPLICNSQSNTTSSCEFSLKNLTANYKESFDLQWFFEDSCVPHTDSNNPSITNTTANNWRVYNLHFNSIENQHRIIHFSVFLGLLLVGILEILFGLSQIIIGFFGCLCGGVSNGRSQIV.

Residues 1 to 11 are Lumenal-facing; sequence MTCCEGWTSCN. A helical membrane pass occupies residues 12 to 32; sequence GFSLLVLLLLGVTLNAIPLIL. Residues 33 to 44 are Cytoplasmic-facing; the sequence is NFVDEDQFFENP. The chain crosses the membrane as a helical span at residues 45–65; it reads ISCFEWWFPGIIGAGVMAIPA. Residues 66 to 83 lie on the Lumenal side of the membrane; the sequence is TTMSLAARKRACCNNKTG. A helical membrane pass occupies residues 84 to 104; that stretch reads MFLSSLLNAITVIGAAYCLLV. Residues 105–185 lie on the Cytoplasmic side of the membrane; it reads SIQALAEGPL…HFNSIENQHR (81 aa). The helical transmembrane segment at 186 to 206 threads the bilayer; it reads IIHFSVFLGLLLVGILEILFG. Residues 207–230 are Lumenal-facing; the sequence is LSQIIIGFFGCLCGGVSNGRSQIV.

Belongs to the L6 tetraspanin family. Post-translationally, glycosylated at Asn-132 in presence of ceramide which inverts the orientation of TM4SF20 in membranes exposing these residues to the endoplasmic reticulum lumen. Cleaved by signal peptidase at Ser-14 but the peptide does not act as a signal peptide. Cleavage is inhibited by ceramide which inverts the orientation of TM4SF20 in membranes exposing the N-terminus to the cytosol and not to the endoplasmic reticulum lumen.

It localises to the membrane. The protein localises to the endoplasmic reticulum membrane. Polytopic transmembrane protein. Inhibits regulated intramembrane proteolysis (RIP) of CREB3L1, inhibiting its activation and the induction of collagen synthesis. In response to ceramide, which alters TM4SF20 membrane topology, stimulates RIP activation of CREB3L1. Ceramide reverses the direction through which transmembrane helices are translocated into the endoplasmic reticulum membrane during translation of TM4SF20, this mechanism is called 'regulated alternative translocation' (RAT) and regulates the function of the transmembrane protein. The sequence is that of Transmembrane 4 L6 family member 20 (TM4SF20) from Bos taurus (Bovine).